A 486-amino-acid chain; its full sequence is Nucleolar protein 56 (486 aa).

Residues 298–416 form the Nop domain; the sequence is CAPSLSALIG…VEDRLEYFTS (119 aa). The segment at 450-486 is disordered; sequence KKAKRLAEESVTATAEAEVDEDAPKPKKKKKSKAGDE. The span at 475–486 shows a compositional bias: basic residues; that stretch reads PKKKKKSKAGDE.

It belongs to the NOP5/NOP56 family.

It is found in the nucleus. The protein localises to the nucleolus. Required for 60S ribosomal subunit synthesis. In Caenorhabditis elegans, this protein is Nucleolar protein 56.